A 1027-amino-acid chain; its full sequence is Scavenger receptor cysteine-rich domain-containing protein SCART1 (1027 aa).

The signal sequence occupies residues methionine 1–alanine 19. Residues valine 20–serine 906 are Extracellular-facing. Residues leucine 28–serine 128 form the SRCR 1 domain. Intrachain disulfides connect cysteine 53-cysteine 117, cysteine 66-cysteine 127, and cysteine 97-cysteine 107. An N-linked (GlcNAc...) asparagine glycan is attached at asparagine 94. N-linked (GlcNAc...) asparagine glycosylation is present at asparagine 129. SRCR domains are found at residues leucine 135–serine 227, alanine 232–serine 326, phenylalanine 328–serine 428, leucine 434–serine 534, leucine 555–serine 656, leucine 661–serine 761, and leucine 786–tryptophan 886. Cystine bridges form between cysteine 160–cysteine 216, cysteine 171–cysteine 226, cysteine 196–cysteine 206, cysteine 253–cysteine 315, cysteine 266–cysteine 325, and cysteine 297–cysteine 307. Asparagine 332 is a glycosylation site (N-linked (GlcNAc...) asparagine). Disulfide bonds link cysteine 353–cysteine 417, cysteine 366–cysteine 427, cysteine 397–cysteine 407, cysteine 472–cysteine 533, cysteine 503–cysteine 513, cysteine 594–cysteine 655, and cysteine 625–cysteine 635. 2 disulfide bridges follow: cysteine 824–cysteine 885 and cysteine 855–cysteine 865. Residues valine 907–proline 927 traverse the membrane as a helical segment. Topologically, residues arginine 928 to leucine 1027 are cytoplasmic.

In terms of tissue distribution, mainly expressed by CD4(+) and CD8(+) T lymphocytes. Also highly expressed in small intestine and colon. Expressed (at protein level) in small intestine, stomach, gall bladder, and placental villi.

It is found in the membrane. In terms of biological role, may play a role in the immune system, perhaps as a co-receptor on alphabeta and gammadelta T-cells. The protein is Scavenger receptor cysteine-rich domain-containing protein SCART1 of Homo sapiens (Human).